We begin with the raw amino-acid sequence, 201 residues long: Recombination protein RecR (201 aa).

A C4-type zinc finger spans residues 60–75; it reads CSCCGNVDTIDPCTVC. One can recognise a Toprim domain in the interval 83–178; sequence SVIIVVEDVA…KITRLAHGVP (96 aa).

Belongs to the RecR family.

Functionally, may play a role in DNA repair. It seems to be involved in an RecBC-independent recombinational process of DNA repair. It may act with RecF and RecO. This chain is Recombination protein RecR, found in Sinorhizobium fredii (strain NBRC 101917 / NGR234).